Consider the following 343-residue polypeptide: UDP-3-O-acylglucosamine N-acyltransferase (343 aa).

His-248 (proton acceptor) is an active-site residue.

It belongs to the transferase hexapeptide repeat family. LpxD subfamily. Homotrimer.

The catalysed reaction is a UDP-3-O-[(3R)-3-hydroxyacyl]-alpha-D-glucosamine + a (3R)-hydroxyacyl-[ACP] = a UDP-2-N,3-O-bis[(3R)-3-hydroxyacyl]-alpha-D-glucosamine + holo-[ACP] + H(+). The protein operates within bacterial outer membrane biogenesis; LPS lipid A biosynthesis. Functionally, catalyzes the N-acylation of UDP-3-O-acylglucosamine using 3-hydroxyacyl-ACP as the acyl donor. Is involved in the biosynthesis of lipid A, a phosphorylated glycolipid that anchors the lipopolysaccharide to the outer membrane of the cell. The polypeptide is UDP-3-O-acylglucosamine N-acyltransferase (Microcystis aeruginosa (strain NIES-843 / IAM M-2473)).